We begin with the raw amino-acid sequence, 78 residues long: Longicornsin (78 aa).

Residues 1 to 22 form the signal peptide; that stretch reads MAESTTTCFLLLVTGYVTAVMS. Residues 23–29 constitute a propeptide that is removed on maturation; that stretch reads EEAHLRS. Cystine bridges form between Cys35-Cys58, Cys43-Cys63, and Cys47-Cys65.

Salivary glands (at protein level).

It localises to the secreted. Has antibacterial activity against the Gram-positive bacteria S.aureus ATCC2592 (MIC=0.8 ug/ml), S.aureus 6A (MIC=0.8 ug/ml) and S.aureus 15A (MIC=1.6 ug/ml), and against the Gram-negative bacteria E.coli ATCC 25922 (MIC=3.2 ug/ml), E.coli 23A (MIC=6.4 ug/ml), E.coli 27A (MIC=6.4 ug/ml), P.aeruginosa 3A (MIC=3.2 ug/ml), P.aeruginosa 7A (MIC=0.8 ug/ml) and H.pylori NCTC11637 (MIC=6.4 ug/ml). Has antifungal activity against C.albidus ATCC2002 (MIC=25.6 ug/ml). Very low hemolytic activity against rabbit erythrocytes. This is Longicornsin from Haemaphysalis longicornis (Bush tick).